Consider the following 535-residue polypeptide: D-2-hydroxyglutarate dehydrogenase, mitochondrial (535 aa).

The N-terminal 50 residues, 1–50 (MVLHLVPRWSASLFRASPRWKKTYSQRASAQLKWLGCPRSVYSPLACRAY), are a transit peptide targeting the mitochondrion. The 180-residue stretch at 110–289 (VRGCSKVLLR…TAVSIVCPPR (180 aa)) folds into the FAD-binding PCMH-type domain. Lysine 115 carries the N6-succinyllysine modification. Residues arginine 400, threonine 404, and lysine 415 each contribute to the (R)-2-hydroxyglutarate site. (R)-lactate is bound at residue arginine 400. The (R)-malate site is built by arginine 400, threonine 404, and lysine 415. Positions 448 and 455 each coordinate Zn(2+). Asparagine 457 serves as a coordination point for (R)-2-hydroxyglutarate. Glutamate 489 provides a ligand contact to Zn(2+). Residue histidine 490 participates in (R)-2-hydroxyglutarate binding. (R)-lactate is bound at residue histidine 490. A (R)-malate-binding site is contributed by histidine 490.

Belongs to the FAD-binding oxidoreductase/transferase type 4 family. FAD is required as a cofactor.

Its subcellular location is the mitochondrion. It catalyses the reaction (R)-2-hydroxyglutarate + A = 2-oxoglutarate + AH2. The catalysed reaction is (R)-malate + A = oxaloacetate + AH2. With respect to regulation, activated by zinc, cobalt and manganese ions. Inhibited by EDTA. Functionally, catalyzes the oxidation of D-2-hydroxyglutarate (D-2-HG) to alpha-ketoglutarate. Also catalyzes the oxidation of other D-2-hydroxyacids, such as D-malate (D-MAL) and D-lactate (D-LAC). Exhibits high activities towards D-2-HG and D-MAL but a very weak activity towards D-LAC. The sequence is that of D-2-hydroxyglutarate dehydrogenase, mitochondrial from Rattus norvegicus (Rat).